The following is a 541-amino-acid chain: Glucose-6-phosphate isomerase (541 aa).

Residue glutamate 347 is the Proton donor of the active site. Residues histidine 378 and lysine 506 contribute to the active site.

The protein belongs to the GPI family.

The protein localises to the cytoplasm. The catalysed reaction is alpha-D-glucose 6-phosphate = beta-D-fructose 6-phosphate. It functions in the pathway carbohydrate biosynthesis; gluconeogenesis. The protein operates within carbohydrate degradation; glycolysis; D-glyceraldehyde 3-phosphate and glycerone phosphate from D-glucose: step 2/4. In terms of biological role, catalyzes the reversible isomerization of glucose-6-phosphate to fructose-6-phosphate. The chain is Glucose-6-phosphate isomerase from Francisella tularensis subsp. holarctica (strain OSU18).